Consider the following 52-residue polypeptide: Large ribosomal subunit protein bL33 (52 aa).

It belongs to the bacterial ribosomal protein bL33 family.

The sequence is that of Large ribosomal subunit protein bL33 from Campylobacter jejuni subsp. doylei (strain ATCC BAA-1458 / RM4099 / 269.97).